Reading from the N-terminus, the 82-residue chain is Myosin light chain alkali (82 aa).

The region spanning 7 to 42 (GCYEDFIECLKLYDKEENGTMMLAELQHALLALGES) is the EF-hand domain.

In terms of assembly, myosin is a hexamer of 2 heavy chains and 4 light chains.

This Drosophila mauritiana (Fruit fly) protein is Myosin light chain alkali (Mlc1).